The chain runs to 324 residues: Putative 12-oxophytodienoate reductase-like protein 1 (324 aa).

Met1 is modified (N-acetylmethionine). Residues 14 to 16 (PMA), Ala47, and Gln89 each bind FMN. The segment covering 99 to 113 (QDCQPNGESPVSSTD) has biased composition (polar residues). The segment at 99–128 (QDCQPNGESPVSSTDKPFADDPSNEFTPPR) is disordered. Residue 160-163 (HGAH) coordinates substrate. Tyr165 acts as the Proton donor in catalysis. Arg212 lines the FMN pocket. Arg252 contributes to the substrate binding site. FMN-binding positions include Gly282 and 303 to 304 (GR).

The protein belongs to the NADH:flavin oxidoreductase/NADH oxidase family. It depends on FMN as a cofactor.

In terms of biological role, putative oxophytodienoate reductase that may be involved in the biosynthesis or metabolism of oxylipin signaling molecules. In Arabidopsis thaliana (Mouse-ear cress), this protein is Putative 12-oxophytodienoate reductase-like protein 1.